A 77-amino-acid polypeptide reads, in one-letter code: Dermatoxin-S1 (77 aa).

An N-terminal signal peptide occupies residues 1-22; that stretch reads MAFLKKSLFLILFLGLVPLSFC. Residues 23–44 constitute a propeptide that is removed on maturation; that stretch reads ENDKREGENEEEQDDDQSEEKR. The residue at position 76 (Q76) is a Glutamine amide.

As to expression, expressed by the skin glands.

The protein localises to the secreted. It localises to the target cell membrane. Its function is as follows. Antimicrobial peptide with potent activity against Gram-positive bacteria B.megaterium, C.glutamicum and S.aureus and mollicutes A.laidlawii and S.melliferum. Less active against Gram-negative bacteria B.cepacia, P.aeruginosa, S.typhimurium and S.meliloti. Probably acts by disturbing membrane functions with its amphipathic structure. The protein is Dermatoxin-S1 of Phyllomedusa sauvagei (Sauvage's leaf frog).